The sequence spans 172 residues: B-box zinc finger protein 18 (172 aa).

The Zn(2+) site is built by Cys5, Cys8, Cys28, His33, Cys56, Cys59, Cys79, and His84. The segment at 5 to 47 adopts a B box-type 1; atypical zinc-finger fold; sequence CDACESAAAIVFCAADEAALCCSCDEKVHKCNKLASRHLRVGL. The B box-type 2; atypical zinc finger occupies 56–96; that stretch reads CDICENAPAFFYCEIDGSSLCLQCDMVVHVGGKRTHRRFLL. Residues 119–172 are disordered; sequence QKASSGRGQESNGNGDHDHNMIDLNSNPQRVHEPGSHNQEEGIDVNNANNHEHE. Residues 120 to 132 show a composition bias toward polar residues; the sequence is KASSGRGQESNGN. The segment covering 148 to 158 has biased composition (basic and acidic residues); the sequence is RVHEPGSHNQE.

As to expression, expressed in vasculature of leaves and petioles.

Its subcellular location is the nucleus. Acts as a negative regulator of seedling photomorphogenesis. Acts as a negative regulator of blue light-mediated inhibition of hypocotyl elongation through increase of bioactive gibberellin levels. Acts as a repressor of thermotolerance by modulating expression of a set of heat shock-responsive genes. The protein is B-box zinc finger protein 18 of Arabidopsis thaliana (Mouse-ear cress).